A 92-amino-acid chain; its full sequence is DNA-binding protein HU (92 aa).

Belongs to the bacterial histone-like protein family. As to quaternary structure, homodimer.

Histone-like DNA-binding protein which is capable of wrapping DNA to stabilize it, and thus to prevent its denaturation under extreme environmental conditions. This chain is DNA-binding protein HU (hup), found in Buchnera aphidicola subsp. Baizongia pistaciae (strain Bp).